The chain runs to 395 residues: RNA polymerase II elongation factor ELL3 (395 aa).

Disordered regions lie at residues 129–177 (LTEG…SEPM) and 189–281 (PSRE…SPEE). Position 242 is a phosphoserine (Ser-242). Acidic residues predominate over residues 243 to 260 (QEGEDWGQDEDEEGDEDG). The segment covering 269–279 (SAPSASESPSP) has biased composition (low complexity). In terms of domain architecture, OCEL spans 283–393 (PDYLLQYRAI…LILEFEEKNR (111 aa)).

The protein belongs to the ELL/occludin family. Component of the little elongation complex (LEC), at least composed of ELL (ELL, ELL2 or ELL3), ZC3H8, ICE1 and ICE2. Component of the super elongation complex (SEC), at least composed of EAF1, EAF2, CDK9, MLLT3/AF9, AFF (AFF1 or AFF4), the P-TEFb complex and ELL (ELL, ELL2 or ELL3). Interacts with AFF4. As to expression, actively expressed in embryonic stem cells (ES cells), while it is weakly expressed in differentiated cells.

Its subcellular location is the nucleus. In terms of biological role, enhancer-binding elongation factor that specifically binds enhancers in embryonic stem cells (ES cells), marks them, and is required for their future activation during stem cell specification. Elongation factor component of the super elongation complex (SEC), a complex required to increase the catalytic rate of RNA polymerase II transcription by suppressing transient pausing by the polymerase at multiple sites along the DNA. Component of the little elongation complex (LEC), a complex required to regulate small nuclear RNA (snRNA) gene transcription by RNA polymerase II and III. Does not only bind to enhancer regions of active genes, but also marks the enhancers that are in a poised or inactive state in ES cells and is required for establishing proper RNA polymerase II occupancy at developmentally regulated genes in a cohesin-dependent manner. Probably required for priming developmentally regulated genes for later recruitment of the super elongation complex (SEC), for transcriptional activation during differentiation. Required for recruitment of P-TEFb within SEC during differentiation. Probably preloaded on germ cell chromatin, suggesting that it may prime gene activation by marking enhancers as early as in the germ cells. Promoting epithelial-mesenchymal transition (EMT). The polypeptide is RNA polymerase II elongation factor ELL3 (Ell3) (Mus musculus (Mouse)).